A 332-amino-acid polypeptide reads, in one-letter code: RNA polymerase principal sigma factor HrdD (332 aa).

The tract at residues 1–25 is disordered; that stretch reads MATRAVARRQSATGETADSASSVRA. The segment covering 10-22 has biased composition (polar residues); that stretch reads QSATGETADSASS. The Polymerase core binding motif lies at 124–137; sequence DLIQEGNAGLVRAV. Positions 294 to 313 form a DNA-binding region, H-T-H motif; that stretch reads LTEVGKEHGLTRERIRQIEK.

The protein belongs to the sigma-70 factor family.

Its function is as follows. Sigma factors are initiation factors that promote the attachment of RNA polymerase to specific initiation sites and are then released. The protein is RNA polymerase principal sigma factor HrdD (hrdD) of Streptomyces viridifaciens.